The sequence spans 354 residues: Protein C42 (354 aa).

Residues 349 to 352 (KRKK) carry the Nuclear localization signal motif.

This sequence belongs to the baculoviridae C42 protein family.

Its subcellular location is the host nucleus. The polypeptide is Protein C42 (Orgyia pseudotsugata (Douglas-fir tussock moth)).